Reading from the N-terminus, the 975-residue chain is E3 ubiquitin-protein ligase BRE1A (975 aa).

The disordered stretch occupies residues methionine 1–threonine 30. Residue lysine 21 is modified to N6-acetyllysine. Residue serine 41 is modified to Phosphoserine. The stretch at threonine 43–leucine 90 forms a coiled coil. The disordered stretch occupies residues lysine 125–alanine 155. 2 positions are modified to phosphoserine: serine 136 and serine 138. A compositionally biased stretch (basic and acidic residues) spans asparagine 139–glycine 151. Coiled-coil stretches lie at residues glutamate 168 to valine 375 and serine 429 to lysine 898. 2 positions are modified to N6-acetyllysine: lysine 348 and lysine 510. The tract at residues aspartate 507 to glutamate 622 is disordered. Residue serine 522 is modified to Phosphoserine. Over residues glutamate 527 to serine 540 the composition is skewed to basic and acidic residues. The span at leucine 543–alanine 552 shows a compositional bias: low complexity. The segment covering asparagine 558–glutamate 622 has biased composition (basic and acidic residues). Phosphoserine is present on serine 562. The RING-type zinc finger occupies cysteine 922 to asparagine 961.

The protein belongs to the BRE1 family. As to quaternary structure, component of the RNF20/40 complex (also known as BRE1 complex) probably composed of 2 copies of RNF20/BRE1A and 2 copies of RNF40/BRE1B. Interacts with UBE2E1/UBCH6. Interacts with p53/TP53 and WAC. Interacts with PAF1; the interaction mediates the association of the PAF1 and RNF20/40 complexes which is a prerequsite for recruitment of UBE2A/B. Interacts with isoform 1 and isoform 2 of PA2G4. Interacts with FBXL19. (Microbial infection) Interacts with human herpesvirus 8 (KSHV) protein RTA/ORF50; this interaction targets the SMC5-SMC6 complex for proteasomal degradation. As to expression, expressed in the normal brain and also in malignant gliomas (at protein level).

Its subcellular location is the nucleus. The catalysed reaction is S-ubiquitinyl-[E2 ubiquitin-conjugating enzyme]-L-cysteine + [acceptor protein]-L-lysine = [E2 ubiquitin-conjugating enzyme]-L-cysteine + N(6)-ubiquitinyl-[acceptor protein]-L-lysine.. The protein operates within protein modification; protein ubiquitination. Functionally, component of the RNF20/40 E3 ubiquitin-protein ligase complex that mediates monoubiquitination of 'Lys-120' of histone H2B (H2BK120ub1). H2BK120ub1 gives a specific tag for epigenetic transcriptional activation and is also prerequisite for histone H3 'Lys-4' and 'Lys-79' methylation (H3K4me and H3K79me, respectively). It thereby plays a central role inb histone code and gene regulation. The RNF20/40 complex forms a H2B ubiquitin ligase complex in cooperation with the E2 enzyme UBE2A or UBE2B; reports about the cooperation with UBE2E1/UBCH are contradictory. Required for transcriptional activation of Hox genes. Recruited to the MDM2 promoter, probably by being recruited by p53/TP53, and thereby acts as a transcriptional coactivator. Mediates the polyubiquitination of isoform 2 of PA2G4 in cancer cells leading to its proteasome-mediated degradation. Its function is as follows. (Microbial infection) Promotes the human herpesvirus 8 (KSHV) lytic cycle by inducing the expression of lytic viral genes including the latency switch gene RTA/ORF50. The protein is E3 ubiquitin-protein ligase BRE1A (RNF20) of Homo sapiens (Human).